We begin with the raw amino-acid sequence, 326 residues long: MAVNPDRTTPFLGVNDPKVAQTGDSMFEGYLEPEQAQDYFAEAEKISIVQQFAQKIPMGTTGQKIPHWTGDVSASWIGEGDMKPITKGNMTSQTIAPHKIATIFVASAETVRANPANYLGTMRTKVATAFAMAFDNAAINGTDSPFPTFLAQTTKEVSLVDPDGTGSNADLTVYDAVAVNALSLLVNAGKKWTHTLLDDITEPILNGAKDKSGRPLFIESTYTEENSPFRLGRIVARPTILSDHVASGTVVGYQGDFRQLVWGQVGGLSFDVTDQATLNLGTPQAPNFVSLWQHNLVAVRVEAEYAFHCNDKDAFVKLTNVDATEA.

It belongs to the L5likevirus major capsid protein gp17 family. L5 head shells are composed of gp17 subunits that are extensively cross-linked.

The protein localises to the virion. The protein is Probable major capsid protein gp17 (17) of Mycobacterium (Mycobacteriophage L5).